The sequence spans 576 residues: RING finger and SPRY domain-containing protein 1 (576 aa).

A signal peptide spans 1–16 (MIVFGWAVFLASRSLG). Ser-50 is modified (phosphoserine). Residues 50 to 99 (SGTDDSVDTQQQQAENSAVPTADTRSQPRDPVRPPRRGRGPHEPRRKKQN) are disordered. Over residues 57–68 (DTQQQQAENSAV) the composition is skewed to polar residues. Positions 83–97 (PPRRGRGPHEPRRKK) are enriched in basic residues. A B30.2/SPRY domain is found at 300-483 (LFLKEGRQLT…CEFNFGAKPF (184 aa)). A glycan (N-linked (GlcNAc...) asparagine) is linked at Asn-314. Residues 527–562 (CSLCCDEVADTQLKPCGHSDLCMDCALQLETCPLCR) form an RING-type zinc finger.

It is found in the secreted. This is RING finger and SPRY domain-containing protein 1 (RSPRY1) from Pongo abelii (Sumatran orangutan).